We begin with the raw amino-acid sequence, 167 residues long: uncharacterized protein (167 aa).

It is found in the plastid. The protein localises to the chloroplast. This is an uncharacterized protein from Mesostigma viride (Green alga).